The sequence spans 682 residues: DNA ligase (682 aa).

NAD(+)-binding positions include 43–47 (DSEYD), 92–93 (SL), and Asp123. Lys125 (N6-AMP-lysine intermediate) is an active-site residue. The NAD(+) site is built by Arg146, Glu184, Lys302, and Lys326. Zn(2+)-binding residues include Cys420, Cys423, Cys438, and Cys443. A BRCT domain is found at 603–682 (TTKGFFTGKK…TFLQKLLIVL (80 aa)).

This sequence belongs to the NAD-dependent DNA ligase family. LigA subfamily. Mg(2+) is required as a cofactor. Mn(2+) serves as cofactor.

It carries out the reaction NAD(+) + (deoxyribonucleotide)n-3'-hydroxyl + 5'-phospho-(deoxyribonucleotide)m = (deoxyribonucleotide)n+m + AMP + beta-nicotinamide D-nucleotide.. Its function is as follows. DNA ligase that catalyzes the formation of phosphodiester linkages between 5'-phosphoryl and 3'-hydroxyl groups in double-stranded DNA using NAD as a coenzyme and as the energy source for the reaction. It is essential for DNA replication and repair of damaged DNA. The chain is DNA ligase from Lawsonia intracellularis (strain PHE/MN1-00).